The following is a 178-amino-acid chain: Large ribosomal subunit protein uL6 (178 aa).

It belongs to the universal ribosomal protein uL6 family. Part of the 50S ribosomal subunit.

In terms of biological role, this protein binds to the 23S rRNA, and is important in its secondary structure. It is located near the subunit interface in the base of the L7/L12 stalk, and near the tRNA binding site of the peptidyltransferase center. This Helicobacter pylori (strain P12) protein is Large ribosomal subunit protein uL6.